The primary structure comprises 80 residues: Small ribosomal subunit protein uS17 (80 aa).

The protein belongs to the universal ribosomal protein uS17 family. Part of the 30S ribosomal subunit.

In terms of biological role, one of the primary rRNA binding proteins, it binds specifically to the 5'-end of 16S ribosomal RNA. This Brucella anthropi (strain ATCC 49188 / DSM 6882 / CCUG 24695 / JCM 21032 / LMG 3331 / NBRC 15819 / NCTC 12168 / Alc 37) (Ochrobactrum anthropi) protein is Small ribosomal subunit protein uS17.